The primary structure comprises 409 residues: Inactive serine protease 35 (409 aa).

The signal sequence occupies residues Met-1–Gly-20. Asn-90 carries N-linked (GlcNAc...) asparagine glycosylation. A Peptidase S1 domain is found at Val-124 to Ala-404. Cysteines 154 and 170 form a disulfide. Residues Val-188–Arg-207 show a composition bias toward basic residues. The disordered stretch occupies residues Val-188–Trp-247.

Belongs to the peptidase S1 family. As to expression, in ovary, it localizes to the theca cells of pre-antral follicles, the theca and granulosa cells of pre-ovulatory and ovulatory follicles, as well as to the developing corpus luteum.

It is found in the secreted. This is Inactive serine protease 35 (Prss35) from Mus musculus (Mouse).